Consider the following 171-residue polypeptide: Ribosome-binding factor A (171 aa).

Over residues 126 to 138 (VREGAKHAGDADP) the composition is skewed to basic and acidic residues. Positions 126–171 (VREGAKHAGDADPYRVSGVEEEAGGSGEVQAEFDAEDTGDRNRQDD) are disordered.

It belongs to the RbfA family. In terms of assembly, monomer. Binds 30S ribosomal subunits, but not 50S ribosomal subunits or 70S ribosomes.

It is found in the cytoplasm. Functionally, one of several proteins that assist in the late maturation steps of the functional core of the 30S ribosomal subunit. Associates with free 30S ribosomal subunits (but not with 30S subunits that are part of 70S ribosomes or polysomes). Required for efficient processing of 16S rRNA. May interact with the 5'-terminal helix region of 16S rRNA. This chain is Ribosome-binding factor A, found in Mycobacterium sp. (strain JLS).